Reading from the N-terminus, the 348-residue chain is Cylicin-2 (348 aa).

The segment at 25–347 is 31 X 3 AA repeats of K-K-X; it reads KKSWNQQHFA…DEKKDAKKKG (323 aa). 2 disordered regions span residues 35–59 and 101–348; these read LLFPKPQRPGTKRRSKPSQIRDNTV and PTRT…KKGK. Composition is skewed to basic and acidic residues over residues 103–159, 166–217, 238–267, and 276–342; these read RTVE…DAKK, KDAE…EKDS, KADEKKDEDGKKDANKGDESKDAKKDAKEI, and KPSS…EKKD. 3 repeat units span residues 157 to 184, 185 to 212, and 213 to 240. The tract at residues 157-240 is 3 X approximate tandem repeats; that stretch reads AKKDSKKGKK…AIELQAVKAD (84 aa).

As to expression, testis.

The protein localises to the cytoplasm. The protein resides in the cytoskeleton. Its subcellular location is the perinuclear theca. It is found in the calyx. Plays a role in the establishment of normal sperm morphology during spermatogenesis. It is required for acrosome attachment to the nuclear envelope, and proper manchette elongation and disassembly. The sequence is that of Cylicin-2 (CYLC2) from Homo sapiens (Human).